A 180-amino-acid chain; its full sequence is Oligoribonuclease (180 aa).

The region spanning 7 to 170 (LIWIDLEMTG…DDIRESIAEL (164 aa)) is the Exonuclease domain. Residue Y128 is part of the active site.

The protein belongs to the oligoribonuclease family.

The protein resides in the cytoplasm. In terms of biological role, 3'-to-5' exoribonuclease specific for small oligoribonucleotides. This is Oligoribonuclease from Pseudomonas fluorescens (strain Pf0-1).